A 367-amino-acid polypeptide reads, in one-letter code: tRNA 2-selenouridine synthase (367 aa).

The 124-residue stretch at 15 to 138 folds into the Rhodanese domain; it reads FLQARPLIDV…LRTFLIQILE (124 aa). The active-site S-selanylcysteine intermediate is the cysteine 98.

It belongs to the SelU family. Monomer.

The enzyme catalyses 5-methylaminomethyl-2-thiouridine(34) in tRNA + selenophosphate + (2E)-geranyl diphosphate + H2O + H(+) = 5-methylaminomethyl-2-selenouridine(34) in tRNA + (2E)-thiogeraniol + phosphate + diphosphate. It carries out the reaction 5-methylaminomethyl-2-thiouridine(34) in tRNA + (2E)-geranyl diphosphate = 5-methylaminomethyl-S-(2E)-geranyl-thiouridine(34) in tRNA + diphosphate. The catalysed reaction is 5-methylaminomethyl-S-(2E)-geranyl-thiouridine(34) in tRNA + selenophosphate + H(+) = 5-methylaminomethyl-2-(Se-phospho)selenouridine(34) in tRNA + (2E)-thiogeraniol. It catalyses the reaction 5-methylaminomethyl-2-(Se-phospho)selenouridine(34) in tRNA + H2O = 5-methylaminomethyl-2-selenouridine(34) in tRNA + phosphate. Involved in the post-transcriptional modification of the uridine at the wobble position (U34) of tRNA(Lys), tRNA(Glu) and tRNA(Gln). Catalyzes the conversion of 2-thiouridine (S2U-RNA) to 2-selenouridine (Se2U-RNA). Acts in a two-step process involving geranylation of 2-thiouridine (S2U) to S-geranyl-2-thiouridine (geS2U) and subsequent selenation of the latter derivative to 2-selenouridine (Se2U) in the tRNA chain. The polypeptide is tRNA 2-selenouridine synthase (Shewanella denitrificans (strain OS217 / ATCC BAA-1090 / DSM 15013)).